A 939-amino-acid chain; its full sequence is MSIDLKKRKVEEDVRSRGKNSKIFSPFRIIGNVSNGVPFATGTLGSTFYIVTCVGKTFQIYDANTLHLLFVSEKETPSSIVALSAHFHYVYAAYENKVGIYKRGIEEHLLELETDANVEHLCIFGDYLCASTDDNSIFIYKKSDPQDKYPSEFYTKLTVTEIQGGEIVSLQHLATYLNKLTVVTKSNVLLFNVRTGKLVFTSNEFPDQITTAEPAPVLDIIALGTVTGEVIMFNMRKGKRIRTIKIPQSRISSLSFRTDGSSHLSVGTSSGDLIFYDLDRRSRIHVLKNIHRESYGGVTQATFLNGQPIIVTSGGDNSLKEYVFDPSLSQGSGDVVVQPPRYLRSRGGHSQPPSYIAFADSQSHFMLSASKDRSLWSFSLRKDAQSQEMSQRLHKKQDGGRVGGSTIKSKFPEIVALAIENARIGEWENIITAHKDEKFARTWDMRNKRVGRWTFDTTDDGFVKSVAMSQCGNFGFIGSSNGSITIYNMQSGILRKKYKLHKRAVTGISLDGMNRKMVSCGLDGIVGFYDFNKSTLLGKLKLDAPITAMVYHRSSDLFALALDDLSIVVIDAVTQRVVRQLWGHSNRITAFDFSPEGRWIVSASLDSTIRTWDLPTGGCIDGIIVDNVATNVKFSPNGDLLATTHVTGNGICIWTNRAQFKTVSTRTIDESEFARMALPSTSVRGNDSMLSGALESNGGEDLNDIDFNTYTSLEQIDKELLTLSIGPRSKMNTLLHLDVIRKRSKPKEAPKKSEKLPFFLQLSGEKVGDEASVREGIAHETPEEIHRRDQEAQKKLDAEEQMNKFKVTGRLGFESHFTKQLREGSQSKDYSSLLATLINFSPAAVDLEIRSLNSFEPFDEIVWFIDALTQGLKSNKNFELYETFMSLLFKAHGDVIHANNKNQDIASALQNWEDVHKKEDRLDDLVKFCMGVAAFVTTA.

Position 2 is an N-acetylserine (Ser-2). 14 WD repeats span residues Ala-40–Val-71, Val-81–Glu-111, Glu-119–Thr-158, Val-168–Thr-201, Gln-208–Lys-245, Ser-252–Leu-287, Tyr-295–Gly-347, Ser-354–Glu-388, Val-415–Thr-454, Val-463–Lys-497, Val-505–Lys-541, Ile-546–Leu-581, Gly-583–Ile-624, and Asp-626–Ser-664. Ser-772 carries the post-translational modification Phosphoserine.

In terms of assembly, interacts with snoRNA U3. Interacts with MPP10. Interacts (via WD repeats) with UTP18. Component of the ribosomal small subunit (SSU) processome composed of at least 40 protein subunits and snoRNA U3.

The protein localises to the nucleus. The protein resides in the nucleolus. Its function is as follows. Involved in nucleolar processing of pre-18S ribosomal RNA and ribosome assembly. In Saccharomyces cerevisiae (strain ATCC 204508 / S288c) (Baker's yeast), this protein is U3 small nucleolar RNA-associated protein 21 (UTP21).